Here is a 521-residue protein sequence, read N- to C-terminus: Matrix metalloproteinase-A (521 aa).

A signal peptide spans 1 to 21; sequence MFTGLHDILIILFLLVTLKIA. Positions 22–95 are cleaved as a propeptide — activation peptide; that stretch reads QNVDHTKFLQ…EDHQKSRGKR (74 aa). The short motif at 78-85 is the Cysteine switch element; sequence PRCGHPDV. Residue cysteine 80 participates in Zn(2+) binding. Residues 96–500 lie on the Extracellular side of the membrane; that stretch reads YAPPQFKWKE…FCPRNEKLVL (405 aa). Residue asparagine 199 is glycosylated (N-linked (GlcNAc...) asparagine). Histidine 215 lines the Zn(2+) pocket. Glutamate 216 is an active-site residue. Positions 219 and 225 each coordinate Zn(2+). The interval 259–298 is disordered; sequence KASKKENEEEERKTENEDKRRKTEKDRGRTREHESDDIRP. Over residues 261–298 the composition is skewed to basic and acidic residues; that stretch reads SKKENEEEERKTENEDKRRKTEKDRGRTREHESDDIRP. 3 Hemopexin repeats span residues 300 to 347, 391 to 443, and 444 to 492; these read ECRV…FPGL, EKYV…WARV, and PKGV…FGFC. N-linked (GlcNAc...) asparagine glycosylation is present at asparagine 469. A helical membrane pass occupies residues 501-521; the sequence is NSSSSHFSLIYATITILILIF.

It belongs to the peptidase M10A family. The cofactor is Zn(2+). As to expression, expressed in the anchor cell. Expressed in the anchor cell throughout the L3 and the early L4 stage, but not in vulva precursor cells P6.p, P6.px, or P6.pxx. Expression in P6.pxxx cells begins in late-L4 stage. During L4 lethargus, expressed in all four vulE cells, but not in vulF cells. The expression in vulE cells persists in adulthood. In males, expressed in the linker cell (LC) from the early L4 stage until LC death during the L4-to-adult molt.

The protein resides in the cell membrane. It localises to the basolateral cell membrane. Functionally, metalloprotease which, together with cadherin cdh-3 and hemicentin him-4, plays a role in anchor cell (AC) invasion during postembryonic vulval development probably by promoting the degradation of the basement membrane separating the gonad from the vulva epithelium. This chain is Matrix metalloproteinase-A, found in Caenorhabditis elegans.